The chain runs to 95 residues: UPF0473 protein BPUM_2377 (95 aa).

Belongs to the UPF0473 family.

This chain is UPF0473 protein BPUM_2377, found in Bacillus pumilus (strain SAFR-032).